Reading from the N-terminus, the 273-residue chain is 2-dehydro-3-deoxyphosphooctonate aldolase (273 aa).

The protein belongs to the KdsA family.

Its subcellular location is the cytoplasm. The enzyme catalyses D-arabinose 5-phosphate + phosphoenolpyruvate + H2O = 3-deoxy-alpha-D-manno-2-octulosonate-8-phosphate + phosphate. It functions in the pathway carbohydrate biosynthesis; 3-deoxy-D-manno-octulosonate biosynthesis; 3-deoxy-D-manno-octulosonate from D-ribulose 5-phosphate: step 2/3. The protein operates within bacterial outer membrane biogenesis; lipopolysaccharide biosynthesis. In Geobacter sp. (strain M21), this protein is 2-dehydro-3-deoxyphosphooctonate aldolase.